A 418-amino-acid chain; its full sequence is MKKVYFKTFGCRTNLFDTQVMGENLKDFSATLEEQEADIIIINSCTVTNGTDSAVRSYARKMARLDKEVLFTGCGVKTQGKELFEKGLLKGVFGHDNKEKINALLQEKKRFFIDDNLENKHLDTTMVSEFVGKTRAFIKIQEGCDFDCNYCIIPSVRGRARSFEERKILEQVGLLCSKGVQEVVLTGTNVGSYGKDRGSNIARLIKKLSQITGLKRIRIGSLEPNQINDEFLELLEEDFLEKHLHIALQHSHDFMLERMNRRNRTKSDRELLEIIASKNFAIGTDFIVGHPGESESVFEKAFKNLESLPLTHIHPFIYSKRKDTPSSLMRDSVSLEDSKKRLNAIKDLIFHKNKAFRQLQLKLNTPLKALVEAQKDGEFKALDQFFNPIKIKSDKPLRASFLEIKEYEIKERENHAVF.

The MTTase N-terminal domain maps to 2 to 110; sequence KKVYFKTFGC…INALLQEKKR (109 aa). [4Fe-4S] cluster-binding residues include Cys-11, Cys-45, Cys-74, Cys-144, Cys-148, and Cys-151. Positions 130-355 constitute a Radical SAM core domain; the sequence is FVGKTRAFIK…KDLIFHKNKA (226 aa).

The protein belongs to the methylthiotransferase family. Requires [4Fe-4S] cluster as cofactor.

The sequence is that of Putative methylthiotransferase jhp_0270 from Helicobacter pylori (strain J99 / ATCC 700824) (Campylobacter pylori J99).